The chain runs to 202 residues: NADH dehydrogenase [ubiquinone] iron-sulfur protein 7, mitochondrial (202 aa).

The transit peptide at 1–56 (MLRRTSFNFTGRAMISRGSPEWSHRLDLKKGKKTTMMHKLGTSKPNNALQYAQMTL) directs the protein to the mitochondrion. [4Fe-4S] cluster-binding residues include C77, C78, C142, and C172.

This sequence belongs to the complex I 20 kDa subunit family. Complex I is composed of 45 different subunits This is a component of the iron-sulfur (IP) fragment of the enzyme. It depends on [4Fe-4S] cluster as a cofactor.

It localises to the mitochondrion. The catalysed reaction is a ubiquinone + NADH + 5 H(+)(in) = a ubiquinol + NAD(+) + 4 H(+)(out). Functionally, core subunit of the mitochondrial membrane respiratory chain NADH dehydrogenase (Complex I) that is believed to belong to the minimal assembly required for catalysis. Complex I functions in the transfer of electrons from NADH to the respiratory chain. The immediate electron acceptor for the enzyme is believed to be ubiquinone. This is NADH dehydrogenase [ubiquinone] iron-sulfur protein 7, mitochondrial (NDHK) from Trypanosoma brucei brucei.